Reading from the N-terminus, the 465-residue chain is MTPAIFSPTTLPPSTATWPCSTSQKLITVRSPLKFKCRATSSSSSITDFDLYDLLGIDRSSDKSQIKSAYRALQKRCHPDIAGDPGHDMAIILNEAYQLLSDPISRQAYDKEQAKLEELRGYTGKPIYSVWCGPETEQRAAFVDEVKCVGCLKCALCAEKTFAIETAYGRARVVAQWADPESKIKEAIEACPVDCISMVERSDLAPLEFLMSKQPRGNVRIGVGNTVGERVSNVFVDVKKFQERYAKAMSRTTKETSQREVQISAVEAIRSISNWLYWRSSPYTKPLSPESNMSLTFTKRKKAVDPDIRKLQDVVAAMKQADQSGRTKEKGSAYLLGEDYWSPSNAALPSSGNNNGSKASSNPQVTRKTFPSEEKPTSRRENRRQFRIKKFPIGTAIVAVFLVQYQASYRAASELNDHIGGSLALSIVNSPWQQILLAGVTWYFIGAMLLQLVEAVQHKLEDKET.

Residues 1–38 constitute a chloroplast transit peptide; it reads MTPAIFSPTTLPPSTATWPCSTSQKLITVRSPLKFKCR. The J domain occupies 50–113; that stretch reads DLYDLLGIDR…ISRQAYDKEQ (64 aa). The segment at 346–385 is disordered; the sequence is AALPSSGNNNGSKASSNPQVTRKTFPSEEKPTSRRENRRQ. A compositionally biased stretch (low complexity) spans 350 to 362; sequence SSGNNNGSKASSN. Basic and acidic residues predominate over residues 370 to 384; that stretch reads FPSEEKPTSRRENRR.

Belongs to the DnaJ family. Expressed in roots, exclusively in the stele.

It is found in the plastid. The protein localises to the chloroplast. Its function is as follows. May function together with HSC70 chaperone to assist protein folding and prevent protein aggregation during salt stress in the chloroplast. Involved in root development. Required for the position-dependent cell fate determination during root hair development. The protein is Chaperone protein dnaJ C76, chloroplastic of Arabidopsis thaliana (Mouse-ear cress).